A 343-amino-acid chain; its full sequence is Protein phosphatase 2C homolog 7, mitochondrial (343 aa).

A mitochondrion-targeting transit peptide spans 1–39 (MFANVGFRTLRVSRGPLYGSCSQIISFSKRTFYSSAKSG). One can recognise a PPM-type phosphatase domain in the interval 76-342 (IYQKLKDSIR…DDITVVVVRV (267 aa)). 3 residues coordinate Mn(2+): D109, G110, and D265.

Mg(2+) serves as cofactor. The cofactor is Mn(2+).

It localises to the mitochondrion. The catalysed reaction is O-phospho-L-seryl-[protein] + H2O = L-seryl-[protein] + phosphate. The enzyme catalyses O-phospho-L-threonyl-[protein] + H2O = L-threonyl-[protein] + phosphate. Functionally, protein phosphatase which positively regulates biosynthesis of the ubiquinone, coenzyme Q. Dephosphorylates and activates the ubiquinone biosynthesis protein CAT5/COQ7. Also dephosphorylates CIT1 on 'Ser-462', which leads to its activation. This is Protein phosphatase 2C homolog 7, mitochondrial (PTC7) from Saccharomyces cerevisiae (strain ATCC 204508 / S288c) (Baker's yeast).